Reading from the N-terminus, the 90-residue chain is Small ribosomal subunit protein bS16 (90 aa).

It belongs to the bacterial ribosomal protein bS16 family.

The chain is Small ribosomal subunit protein bS16 from Listeria monocytogenes serotype 4b (strain F2365).